The primary structure comprises 909 residues: Protein virilizer (909 aa).

A compositionally biased stretch (polar residues) spans 746–784; it reads STSKNTNTNVSKQQQQPQNSTPCSSNRFLFNKSSLISQE. The tract at residues 746 to 824 is disordered; sequence STSKNTNTNV…TNMTRQPTTL (79 aa). The span at 785–799 shows a compositional bias: low complexity; that stretch reads SNGSNNNSGTQGPGS. A compositionally biased stretch (polar residues) spans 800 to 810; the sequence is MNESYSLDNSF. Residues 811-824 are compositionally biased toward low complexity; sequence NTTNTNMTRQPTTL. A phosphoserine mark is found at Ser-856 and Ser-898.

This sequence belongs to the vir family. In terms of assembly, component of the MIS (mRNA N6-methyladenosine (m6A) methylation) complex, at least composed of IME4, KAR4, MUM2, SLZ1, and VIR1. Interacts with KAR4. Interacts with SLZ1. Interacts with MUM2. Interacts with IME4.

It localises to the cytoplasm. It is found in the nucleus. The protein resides in the nucleolus. In terms of biological role, component of the MIS complex, a complex that mediates N6-methyladenosine (m6A) methylation of meiotic mRNAs and is required for initiation of meiosis, progression through the meiotic divisions and sporulation. In the complex, performs a scaffolding role stabilizing the other complex members. The polypeptide is Protein virilizer (Saccharomyces cerevisiae (strain ATCC 204508 / S288c) (Baker's yeast)).